The sequence spans 240 residues: ATP-dependent dethiobiotin synthetase BioD (240 aa).

Residue 13–18 (GVGKTI) coordinates ATP. Thr17 provides a ligand contact to Mg(2+). The active site involves Lys38. Thr42 serves as a coordination point for substrate. ATP-binding positions include Asp55, 116 to 119 (EGVG), and 214 to 216 (PYL). Positions 55 and 116 each coordinate Mg(2+).

This sequence belongs to the dethiobiotin synthetase family. Homodimer. Mg(2+) is required as a cofactor.

The protein localises to the cytoplasm. The enzyme catalyses (7R,8S)-7,8-diammoniononanoate + CO2 + ATP = (4R,5S)-dethiobiotin + ADP + phosphate + 3 H(+). The protein operates within cofactor biosynthesis; biotin biosynthesis; biotin from 7,8-diaminononanoate: step 1/2. Its function is as follows. Catalyzes a mechanistically unusual reaction, the ATP-dependent insertion of CO2 between the N7 and N8 nitrogen atoms of 7,8-diaminopelargonic acid (DAPA, also called 7,8-diammoniononanoate) to form a ureido ring. The sequence is that of ATP-dependent dethiobiotin synthetase BioD from Thermodesulfovibrio yellowstonii (strain ATCC 51303 / DSM 11347 / YP87).